The sequence spans 370 residues: Aspartate beta-hydroxylase domain-containing protein 2 (370 aa).

Over 1-57 the chain is Cytoplasmic; that stretch reads MVWALPRTSSPSCIAPSYKPDSGWIKMSAEWLIDWSCLLNGLRDLIAGCIQAVRDCN. A helical transmembrane segment spans residues 58–78; sequence SFALTTVICLLMLFAWYCYRV. Residues 79–370 lie on the Lumenal side of the membrane; the sequence is GKDQPRSPFA…ALDSIFAPGR (292 aa). The N-linked (GlcNAc...) asparagine glycan is linked to Asn-212. Residues Trp-229 and Ser-273 each coordinate 2-oxoglutarate. His-284 is a Fe cation binding site. 293–295 contributes to the 2-oxoglutarate binding site; the sequence is RCH. His-329 lines the Fe cation pocket. Arg-342 serves as a coordination point for 2-oxoglutarate.

It belongs to the aspartyl/asparaginyl beta-hydroxylase family. Fe cation serves as cofactor.

Its subcellular location is the membrane. Functionally, may function as 2-oxoglutarate-dependent dioxygenase. This Xenopus tropicalis (Western clawed frog) protein is Aspartate beta-hydroxylase domain-containing protein 2 (asphd2).